Consider the following 323-residue polypeptide: Conjugal transfer protein TrbB (323 aa).

151–158 lines the ATP pocket; it reads GGTGSGKT.

It belongs to the GSP E family.

It localises to the cytoplasm. This is Conjugal transfer protein TrbB (trbB) from Rhizobium radiobacter (Agrobacterium tumefaciens).